Consider the following 371-residue polypeptide: N-methyl-L-tryptophan oxidase (371 aa).

4-34 is an FAD binding site; it reads DLIVIGSGSVGSAAGYYASQAGLNVLMIDSA. Cys307 is modified (S-8alpha-FAD cysteine).

Belongs to the MSOX/MTOX family. MTOX subfamily. As to quaternary structure, monomer. FAD is required as a cofactor.

The catalysed reaction is N(alpha)-methyl-L-tryptophan + O2 + H2O = L-tryptophan + formaldehyde + H2O2. Functionally, catalyzes the oxidative demethylation of N-methyl-L-tryptophan. The sequence is that of N-methyl-L-tryptophan oxidase from Yersinia pseudotuberculosis serotype O:1b (strain IP 31758).